A 64-amino-acid polypeptide reads, in one-letter code: Neurotoxin lambda-MeuTx (64 aa).

Positions 1-18 are cleaved as a signal peptide; it reads MSTFIVVFLLLTAILCHA. The propeptide occupies 19 to 27; the sequence is EHAIDETAR. 3 disulfides stabilise this stretch: C29/C43, C36/C49, and C42/C58.

It belongs to the scorpion calcin-like family. In terms of tissue distribution, expressed by the venom gland.

It is found in the secreted. Functionally, voltage-gated potassium channel (Kv) inhibitor. In addition it may increase intracellular calcium release through the activation of nuclear inositol 1,4,5-trisphosphate receptors (ITPR) of cardiomyocytes, thereby causing an increase in the contraction frequency of these cells. The chain is Neurotoxin lambda-MeuTx from Mesobuthus eupeus (Lesser Asian scorpion).